A 75-amino-acid polypeptide reads, in one-letter code: Putative membrane protein insertion efficiency factor (75 aa).

The protein belongs to the UPF0161 family.

It is found in the cell inner membrane. In terms of biological role, could be involved in insertion of integral membrane proteins into the membrane. The chain is Putative membrane protein insertion efficiency factor from Leptospira biflexa serovar Patoc (strain Patoc 1 / ATCC 23582 / Paris).